Here is a 341-residue protein sequence, read N- to C-terminus: NADH-quinone oxidoreductase subunit H 2 (341 aa).

A run of 8 helical transmembrane segments spans residues isoleucine 13–isoleucine 33, glycine 82–isoleucine 102, valine 115–glycine 135, isoleucine 161–valine 181, valine 190–leucine 210, leucine 242–phenylalanine 262, tryptophan 277–methionine 297, and valine 317–glycine 337.

It belongs to the complex I subunit 1 family. As to quaternary structure, NDH-1 is composed of 14 different subunits. Subunits NuoA, H, J, K, L, M, N constitute the membrane sector of the complex.

It is found in the cell inner membrane. It carries out the reaction a quinone + NADH + 5 H(+)(in) = a quinol + NAD(+) + 4 H(+)(out). In terms of biological role, NDH-1 shuttles electrons from NADH, via FMN and iron-sulfur (Fe-S) centers, to quinones in the respiratory chain. The immediate electron acceptor for the enzyme in this species is believed to be ubiquinone. Couples the redox reaction to proton translocation (for every two electrons transferred, four hydrogen ions are translocated across the cytoplasmic membrane), and thus conserves the redox energy in a proton gradient. This subunit may bind ubiquinone. The polypeptide is NADH-quinone oxidoreductase subunit H 2 (Rhodopseudomonas palustris (strain HaA2)).